A 152-amino-acid chain; its full sequence is Acyl carrier protein, mitochondrial (152 aa).

In terms of domain architecture, Carrier spans 73-148 (KLINERVLLV…DIIKYVADKE (76 aa)). An O-(pantetheine 4'-phosphoryl)serine modification is found at Ser108.

Belongs to the acyl carrier protein (ACP) family. As to quaternary structure, complex I is composed of about 45 different subunits.

It is found in the mitochondrion. Functionally, carrier of the growing fatty acid chain in fatty acid biosynthesis. Accessory and non-catalytic subunit of the mitochondrial membrane respiratory chain NADH dehydrogenase (Complex I), which functions in the transfer of electrons from NADH to the respiratory chain. The sequence is that of Acyl carrier protein, mitochondrial from Drosophila melanogaster (Fruit fly).